The primary structure comprises 495 residues: Glycerol kinase (495 aa).

T11 lines the ADP pocket. ATP is bound by residues T11, T12, and S13. T11 lines the sn-glycerol 3-phosphate pocket. R15 lines the ADP pocket. Residues R81, E82, Y133, and D242 each contribute to the sn-glycerol 3-phosphate site. Glycerol is bound by residues R81, E82, Y133, D242, and Q243. ADP-binding residues include T264 and G307. 4 residues coordinate ATP: T264, G307, Q311, and G408. Residue G408 participates in ADP binding.

The protein belongs to the FGGY kinase family.

The catalysed reaction is glycerol + ATP = sn-glycerol 3-phosphate + ADP + H(+). It functions in the pathway polyol metabolism; glycerol degradation via glycerol kinase pathway; sn-glycerol 3-phosphate from glycerol: step 1/1. Its activity is regulated as follows. Inhibited by fructose 1,6-bisphosphate (FBP). In terms of biological role, key enzyme in the regulation of glycerol uptake and metabolism. Catalyzes the phosphorylation of glycerol to yield sn-glycerol 3-phosphate. The chain is Glycerol kinase from Geobacter sp. (strain M21).